The chain runs to 248 residues: UDP-2,3-diacylglucosamine hydrolase (248 aa).

Mn(2+)-binding residues include aspartate 8, histidine 10, aspartate 41, asparagine 79, and histidine 114. Position 79–80 (79–80 (NR)) interacts with substrate. 5 residues coordinate substrate: aspartate 122, serine 160, aspartate 171, glutamine 174, and histidine 202. Residues histidine 202 and histidine 204 each coordinate Mn(2+).

Belongs to the LpxH family. It depends on Mn(2+) as a cofactor.

It localises to the cell inner membrane. It carries out the reaction UDP-2-N,3-O-bis[(3R)-3-hydroxytetradecanoyl]-alpha-D-glucosamine + H2O = 2-N,3-O-bis[(3R)-3-hydroxytetradecanoyl]-alpha-D-glucosaminyl 1-phosphate + UMP + 2 H(+). The protein operates within glycolipid biosynthesis; lipid IV(A) biosynthesis; lipid IV(A) from (3R)-3-hydroxytetradecanoyl-[acyl-carrier-protein] and UDP-N-acetyl-alpha-D-glucosamine: step 4/6. Functionally, hydrolyzes the pyrophosphate bond of UDP-2,3-diacylglucosamine to yield 2,3-diacylglucosamine 1-phosphate (lipid X) and UMP by catalyzing the attack of water at the alpha-P atom. Involved in the biosynthesis of lipid A, a phosphorylated glycolipid that anchors the lipopolysaccharide to the outer membrane of the cell. The sequence is that of UDP-2,3-diacylglucosamine hydrolase from Stenotrophomonas maltophilia (strain K279a).